The chain runs to 75 residues: MAKKNIHPQWYEEAKFYCNGEIVKIIGSTRMEINADIWSGNHPFYIGTQKIVDTEGRIDKFIRKYNLNSENSESL.

It belongs to the bacterial ribosomal protein bL31 family. Type A subfamily. In terms of assembly, part of the 50S ribosomal subunit.

It localises to the plastid. It is found in the chloroplast. Functionally, binds the 23S rRNA. This chain is Large ribosomal subunit protein bL31c, found in Cyanidium caldarium (Red alga).